Consider the following 141-residue polypeptide: Protein E6 (141 aa).

Zinc fingers lie at residues 27 to 64 (CRFCNSFLTYIELREFDYKNLQLIWTQEDFVFACCSSC) and 101 to 137 (CQYCLKCLDLIEKLDICCSHQAFHKVRGNWKGRCRHC).

It belongs to the papillomaviridae E6 protein family. In terms of assembly, forms homodimers. Interacts with ubiquitin-protein ligase UBE3A/E6-AP; this interaction stimulates UBE3A ubiquitin activity. Interacts with host BAK1.

It is found in the host cytoplasm. It localises to the host nucleus. Functionally, plays a major role in the induction and maintenance of cellular transformation. E6 associates with host UBE3A/E6-AP ubiquitin-protein ligase and modulates its activity. Protects host keratinocytes from apoptosis by mediating the degradation of host BAK1. May also inhibit host immune response. In Homo sapiens (Human), this protein is Protein E6.